The sequence spans 85 residues: UPF0297 protein lhv_0439 (85 aa).

The protein belongs to the UPF0297 family.

The polypeptide is UPF0297 protein lhv_0439 (Lactobacillus helveticus (strain DPC 4571)).